The primary structure comprises 360 residues: Inhibin alpha chain (360 aa).

The first 17 residues, 1 to 17, serve as a signal peptide directing secretion; sequence MWLQLLLLLLAPQGGHG. Positions 18-60 are excised as a propeptide; sequence CHGLELDRELVLAKVRALFLDALGPPPVTGEGGDPGVRRLHRR. Positions 61–226 are cleaved as a propeptide — inhibin alpha N-terminal region; sequence HAVGGFMRRG…PPSGGERARR (166 aa). Asn-140 and Asn-262 each carry an N-linked (GlcNAc...) asparagine glycan. 3 disulfide bridges follow: Cys-256–Cys-322, Cys-285–Cys-357, and Cys-289–Cys-359.

Belongs to the TGF-beta family. As to quaternary structure, dimeric, linked by one or more disulfide bonds. Activin B is a dimer of alpha and beta-B. Inhibin A is a dimer of alpha and beta-A. Inhibin B is a dimer of alpha and beta-B. Interacts with TGFBR3L; this interaction regulates female fertility. Post-translationally, proteolytic processing yields a number of bioactive forms, consisting either solely of the mature alpha chain, of the most N-terminal propeptide linked through a disulfide bond to the mature alpha chain, or of the entire proprotein.

The protein localises to the secreted. Inhibins and activins inhibit and activate, respectively, the secretion of follitropin by the pituitary gland. Inhibins/activins are involved in regulating a number of diverse functions such as hypothalamic and pituitary hormone secretion, gonadal hormone secretion, germ cell development and maturation, erythroid differentiation, insulin secretion, nerve cell survival, embryonic axial development or bone growth, depending on their subunit composition. Inhibins appear to oppose the functions of activins. Functionally, inhibin A is a dimer of alpha/INHA and beta-A/INHBA that functions as a feedback regulator in the hypothalamic-pituitary-gonadal (HPG) axis. Inhibits the secretion of FSH from the anterior pituitary gland by acting on pituitary gonadotrope cells. Antagonizes activin A by binding to the proteoglycan, betaglycan, and forming a stable complex with and, thereby, sequestering type II activin receptors while excluding type I receptor. In terms of biological role, inhibin B is a dimer of alpha and beta-B that plays a crucial role in the regulation of the reproductive system by inhibiting the secretion of follicle-stimulating hormone (FSH) from the anterior pituitary gland. Thereby, maintains reproductive homeostasis in both males and females. Acts as a more potent suppressor of FSH release than inhibin A. Functions as competitive receptor antagonist binding activin type II receptors with high affinity in the presence of the TGF-beta type III coreceptor/TGFBR3L. This chain is Inhibin alpha chain (INHA), found in Bos taurus (Bovine).